We begin with the raw amino-acid sequence, 423 residues long: Phospholipase A1-IIalpha (423 aa).

Positions S194–I217 form a coiled coil. The Acyl-ester intermediate role is filled by S223. Residues S223, D290, and H327 each act as charge relay system in the active site. Residues H399–D423 are disordered. A compositionally biased stretch (acidic residues) spans D401–D410. Residues S411–D423 show a composition bias toward polar residues.

This sequence belongs to the AB hydrolase superfamily. Lipase family.

It localises to the cytoplasm. Its function is as follows. Acylhydrolase that catalyzes the hydrolysis of phospholipids at the sn-1 position. The sequence is that of Phospholipase A1-IIalpha from Arabidopsis thaliana (Mouse-ear cress).